A 144-amino-acid chain; its full sequence is HTH-type transcriptional regulator MntR (144 aa).

An HTH dtxR-type domain is found at M1 to T63. Residues D8, E11, H77, E99, E102, and H103 each coordinate Mn(2+).

It belongs to the DtxR/MntR family. In terms of assembly, homodimer.

It is found in the cytoplasm. With respect to regulation, DNA binding is strongly activated by Mn(2+). In terms of biological role, central regulator of manganese homeostasis. In Bacillus pumilus (strain SAFR-032), this protein is HTH-type transcriptional regulator MntR.